Consider the following 144-residue polypeptide: Large ribosomal subunit protein uL15 (144 aa).

The disordered stretch occupies residues 1–57; the sequence is MELNNLKPAEGAKHAKRRVGRGIGSGLGKTAGRGHKGQKSRSGGFHKVGFEGGQMPL. Over residues 21 to 31 the composition is skewed to gly residues; it reads RGIGSGLGKTA.

Belongs to the universal ribosomal protein uL15 family. Part of the 50S ribosomal subunit.

Its function is as follows. Binds to the 23S rRNA. In Paraburkholderia xenovorans (strain LB400), this protein is Large ribosomal subunit protein uL15.